The primary structure comprises 206 residues: uncharacterized protein (206 aa).

This is an uncharacterized protein from Haemophilus influenzae (strain ATCC 51907 / DSM 11121 / KW20 / Rd).